A 300-amino-acid chain; its full sequence is Taste receptor type 2 member 105 (300 aa).

Residues 1-7 lie on the Extracellular side of the membrane; it reads MLSAAEG. The helical transmembrane segment at 8–28 threads the bilayer; it reads ILLSIATVEAGLGVLGNTFIA. Topologically, residues 29-43 are cytoplasmic; that stretch reads LVNCMDWAKNNKLSM. Residues 44–64 form a helical membrane-spanning segment; sequence TGFLLIGLATSRIFIVWLLTL. The Extracellular portion of the chain corresponds to 65-87; that stretch reads DAYAKLFYPSKYFSSSLIEIISY. A helical membrane pass occupies residues 88–108; the sequence is IWMTVNHLTVWFATSLSIFYF. At 109-128 the chain is on the cytoplasmic side; that stretch reads LKIANFSDCVFLWLKRRTDK. Residues 129–149 traverse the membrane as a helical segment; that stretch reads AFVFLLGCLLTSWVISFSFVV. Topologically, residues 150–181 are extracellular; the sequence is KVMKDGKVNHRNRTSEMYWEKRQFTINYVFLN. Asparagine 161 carries N-linked (GlcNAc...) asparagine glycosylation. A helical transmembrane segment spans residues 182–202; the sequence is IGVISLFMMTLTACFLLIMSL. At 203 to 233 the chain is on the cytoplasmic side; that stretch reads WRHSRQMQSGVSGFRDLNTEAHVKAIKFLIS. A helical membrane pass occupies residues 234–254; it reads FIILFVLYFIGVSIEIICIFI. Over 255 to 259 the chain is Extracellular; that stretch reads PENKL. A helical membrane pass occupies residues 260–280; it reads LFIFGFTTASIYPCCHSFILI. Topologically, residues 281-300 are cytoplasmic; sequence LSNSQLKQAFVKVLQGLKFF.

It belongs to the G-protein coupled receptor T2R family. In terms of tissue distribution, expressed in subsets of taste receptor cells of the tongue and palate epithelium and exclusively in gustducin-positive cells. Expressed in gastric and duodenal tissues.

Its subcellular location is the membrane. Its function is as follows. Gustducin-coupled cycloheximide receptor implicated in the perception of bitter compounds in the oral cavity and the gastrointestinal tract. Signals through PLCB2 and the calcium-regulated cation channel TRPM5. This Mus musculus (Mouse) protein is Taste receptor type 2 member 105 (Tas2r105).